The following is a 256-amino-acid chain: Isoprenyl transferase (256 aa).

Residues 1–22 (MLEKFSKWKGNRSNHTTPSHSL) are disordered. Aspartate 36 is an active-site residue. Aspartate 36 provides a ligand contact to Mg(2+). Residues 37–40 (GNGR), tryptophan 41, arginine 49, histidine 53, and 81–83 (STE) each bind substrate. Catalysis depends on asparagine 84, which acts as the Proton acceptor. Residues tryptophan 85, arginine 87, arginine 204, and 210–212 (RLS) each bind substrate. Residue glutamate 223 participates in Mg(2+) binding.

It belongs to the UPP synthase family. In terms of assembly, homodimer. The cofactor is Mg(2+).

In terms of biological role, catalyzes the condensation of isopentenyl diphosphate (IPP) with allylic pyrophosphates generating different type of terpenoids. The sequence is that of Isoprenyl transferase from Halalkalibacterium halodurans (strain ATCC BAA-125 / DSM 18197 / FERM 7344 / JCM 9153 / C-125) (Bacillus halodurans).